Consider the following 267-residue polypeptide: Zerumbone synthase (267 aa).

9–33 contributes to the NAD(+) binding site; sequence LVTGGASGIGESIARLFIEHGAKIC. S142 serves as a coordination point for substrate. Y155 (proton acceptor) is an active-site residue.

It belongs to the short-chain dehydrogenases/reductases (SDR) family. Expressed in leaves, stems and rhizomes.

It catalyses the reaction 10-hydroxy-alpha-humulene + NAD(+) = zerumbone + NADH + H(+). Functionally, catalyzes 8-hydroxy-alpha-humulene into zerumbone in presence of NAD. Also converts borneol to camphor in vitro. Zerumbone is a highly promising multi-anticancer agent. This Zingiber zerumbet (Shampoo ginger) protein is Zerumbone synthase (ZSD1).